A 255-amino-acid chain; its full sequence is MDELTKRVIPCLDIKGGRVVKGVQFVNLIDAGDPVSCAVAYEENKADELCFLDITASSDKRDILLHLVEEVANKLFIPFTVGGGIRTIEDVKAVLNKGADKVSINTSAFQNPKLLKDASEIYGSQCIVCAIDVKFHPERKRYEVYLNGGRAETGREALDWGKEAHEMGAGEILLTSMDKDGTKDGFDINLMKSFTSNLTIPIIASGGAGNPEHMAEVILRGGADAVLAASIFHFGEFSIQETKQTMKEMGIKVRL.

Active-site residues include Asp13 and Asp132.

This sequence belongs to the HisA/HisF family. In terms of assembly, heterodimer of HisH and HisF.

The protein resides in the cytoplasm. The catalysed reaction is 5-[(5-phospho-1-deoxy-D-ribulos-1-ylimino)methylamino]-1-(5-phospho-beta-D-ribosyl)imidazole-4-carboxamide + L-glutamine = D-erythro-1-(imidazol-4-yl)glycerol 3-phosphate + 5-amino-1-(5-phospho-beta-D-ribosyl)imidazole-4-carboxamide + L-glutamate + H(+). It functions in the pathway amino-acid biosynthesis; L-histidine biosynthesis; L-histidine from 5-phospho-alpha-D-ribose 1-diphosphate: step 5/9. Functionally, IGPS catalyzes the conversion of PRFAR and glutamine to IGP, AICAR and glutamate. The HisF subunit catalyzes the cyclization activity that produces IGP and AICAR from PRFAR using the ammonia provided by the HisH subunit. This chain is Imidazole glycerol phosphate synthase subunit HisF, found in Leptospira biflexa serovar Patoc (strain Patoc 1 / ATCC 23582 / Paris).